The primary structure comprises 735 residues: Polycomb protein sop-2 (735 aa).

Residues 1-15 (MSSNLTSNEMSSTSA) show a composition bias toward polar residues. Disordered regions lie at residues 1–59 (MSSN…SSSS), 223–288 (AARS…APAA), and 300–534 (PQES…PVLQ). An RNA-binding region spans residues 224-503 (ARSSRMAARR…APATPATPAS (280 aa)). The segment covering 239-288 (YRGAFRGAARGAPSRRPAPAAEVAPETPVAAPMAPAAPAAPATPEAAPAA) has biased composition (low complexity). Basic and acidic residues-rich tracts occupy residues 317-355 (DTSK…DGGR) and 389-398 (RAAEKKKPED). Over residues 399–413 (SDAAEEQEVEMEVDN) the composition is skewed to acidic residues. Residues 450–470 (VEPKKEPVDEPAEKIPKRSEA) show a composition bias toward basic and acidic residues. The span at 471–504 (APEVPATATTKEAPPSTSSSPPDAPATPATPASS) shows a compositional bias: low complexity. Over residues 520–534 (LTGSPPESETPPVLQ) the composition is skewed to polar residues. Residues 621-712 (LVENNHEATL…YGTEVLNHYR (92 aa)) are SAM-like.

As to quaternary structure, homodimer. Interacts with ubc-9. Binds through its N-terminal region to the N-terminal region of sor-1. In terms of processing, sumoylated by ubc-9. Sumoylation is required for the transcriptional regulation of homeotic genes. Widely expressed. Weakly expressed in most somatic cells of 50-cell stage embryos. At 200 cell stage, it is strongly expressed. By comma stage, it is expressed in most somatic cells.

It is found in the nucleus. Its function is as follows. Polycomb group (PcG) protein. PcG proteins act by forming multiprotein complexes, which are required to maintain the transcriptionally repressive state of homeotic genes throughout development. PcG proteins are not required to initiate repression, but to maintain it during later stages of development. Also required to repress expression of other genes and for localization of sor-1. Binds RNA. This chain is Polycomb protein sop-2 (sop-2), found in Caenorhabditis elegans.